The chain runs to 193 residues: CASP-like protein 2D1 (193 aa).

Residues 1–24 (MRANNNNTREEERSSSSKQQQPQA) are disordered. Over 1 to 29 (MRANNNNTREEERSSSSKQQQPQAHMSLK) the chain is Cytoplasmic. Residues 30-50 (IIDSCLRLSVVPLSVATIWLT) traverse the membrane as a helical segment. Topologically, residues 51-73 (VTNHESNPDYGNLDYNSIMGLKY) are extracellular. Residues 74 to 94 (MVGVSAISAIYALLSTISLWV) traverse the membrane as a helical segment. Over 95–109 (TCLVSKAWLFFVPDQ) the chain is Cytoplasmic. Residues 110–132 (VLAYVMTTSVAGATEIVYLLNKG) traverse the membrane as a helical segment. Residues 133–151 (DKIVTWSEMCSSYPHYCSK) are Extracellular-facing. Residues 152 to 172 (LTIALGLHVFVLFFFLFLSVI) form a helical membrane-spanning segment. The Cytoplasmic portion of the chain corresponds to 173 to 193 (SAYRAFSPFDPPCDSQTNIDA).

This sequence belongs to the Casparian strip membrane proteins (CASP) family. In terms of assembly, homodimer and heterodimers.

The protein localises to the cell membrane. In Arabidopsis lyrata subsp. lyrata (Lyre-leaved rock-cress), this protein is CASP-like protein 2D1.